Here is a 347-residue protein sequence, read N- to C-terminus: Protein pelota homolog (347 aa).

The protein belongs to the eukaryotic release factor 1 family. Pelota subfamily. As to quaternary structure, monomer. The cofactor is a divalent metal cation.

It is found in the cytoplasm. Its function is as follows. May function in recognizing stalled ribosomes, interact with stem-loop structures in stalled mRNA molecules, and effect endonucleolytic cleavage of the mRNA. May play a role in the release non-functional ribosomes and degradation of damaged mRNAs. Has endoribonuclease activity. The chain is Protein pelota homolog from Methanothrix thermoacetophila (strain DSM 6194 / JCM 14653 / NBRC 101360 / PT) (Methanosaeta thermophila).